The sequence spans 884 residues: Probable LRR receptor-like serine/threonine-protein kinase PAM74 (884 aa).

A signal peptide spans 1–23 (MDSPCWLLLLLLGAFAIIGCVQA). Residues 24–510 (QDQQEFISLD…TEKNSKKKFP (487 aa)) are Extracellular-facing. Residues Asn-143, Asn-182, Asn-200, Asn-256, Asn-289, Asn-400, Asn-403, Asn-417, Asn-433, Asn-444, Asn-465, and Asn-470 are each glycosylated (N-linked (GlcNAc...) asparagine). LRR repeat units follow at residues 412 to 433 (RVLS…AIQN), 436 to 457 (HLEK…FLAQ), and 460 to 480 (SLVI…QGLR). A helical membrane pass occupies residues 511-531 (VVIVASVASVAIIVAVLVIIF). Residues 532–884 (VLSKKKSSTV…FDTELFPRAR (353 aa)) are Cytoplasmic-facing. At Thr-570 the chain carries Phosphothreonine. The Protein kinase domain occupies 579–852 (NNFQRVVGEG…QVANELKECL (274 aa)). ATP is bound by residues 585-593 (VGEGGFGVV) and Lys-607. Position 652 is a phosphotyrosine (Tyr-652). Asp-704 functions as the Proton acceptor in the catalytic mechanism. The residue at position 738 (Ser-738) is a Phosphoserine. 2 positions are modified to phosphothreonine: Thr-739 and Thr-744. Tyr-752 is modified (phosphotyrosine).

It belongs to the protein kinase superfamily. Ser/Thr protein kinase family. In terms of assembly, binds to the ammonium transporter AMT1-1.

Its subcellular location is the membrane. It carries out the reaction L-seryl-[protein] + ATP = O-phospho-L-seryl-[protein] + ADP + H(+). It catalyses the reaction L-threonyl-[protein] + ATP = O-phospho-L-threonyl-[protein] + ADP + H(+). Its function is as follows. Required for accurate photosynthesis. The protein is Probable LRR receptor-like serine/threonine-protein kinase PAM74 (PAM74) of Arabidopsis thaliana (Mouse-ear cress).